The chain runs to 447 residues: Asparagine--tRNA ligase (447 aa).

It belongs to the class-II aminoacyl-tRNA synthetase family. As to quaternary structure, homodimer.

The protein resides in the cytoplasm. The enzyme catalyses tRNA(Asn) + L-asparagine + ATP = L-asparaginyl-tRNA(Asn) + AMP + diphosphate + H(+). The sequence is that of Asparagine--tRNA ligase from Mycoplasma mobile (strain ATCC 43663 / 163K / NCTC 11711) (Mesomycoplasma mobile).